The following is a 338-amino-acid chain: Solute carrier family 35 member G5 (338 aa).

Residues 1 to 21 (MAGSHPYFNLPDSTHPSPPSA) form a disordered region. The next 9 helical transmembrane spans lie at 37 to 57 (TNGL…VGPL), 67 to 87 (LPSL…ALPL), 105 to 125 (CFCA…VQVV), 160 to 180 (CGLL…LWTL), 190 to 210 (ALGY…LLVY), 221 to 241 (TVAF…LFVL), 250 to 270 (LLSW…FTCV), 281 to 301 (LVCA…YYVL), and 305 to 325 (VAPS…IITA). Residues 49 to 174 (LPAGFVGPLS…SILGLIIIVG (126 aa)) enclose the EamA 1 domain. One can recognise an EamA 2 domain in the interval 272–325 (YAVTKAHPALVCAVLHSEVVVALILQYYVLHETVAPSDIMGAGIVLGSIAIITA).

It belongs to the SLC35G solute transporter family.

The protein localises to the membrane. This is Solute carrier family 35 member G5 (SLC35G5) from Pan troglodytes (Chimpanzee).